The primary structure comprises 1042 residues: Elongation factor 3 (1042 aa).

6 HEAT repeats span residues 9-46 (KVLM…DPDT), 86-124 (PYLV…TMNP), 167-204 (YRLP…LISN), 206-242 (DIDK…EVHA), 243-280 (STLS…LVED), and 289-327 (PKLI…VKEG). ABC transporter domains lie at 425-642 (EEGE…YQDI) and 668-994 (CRMR…EQEE). Residues Asn-704, Glu-923, Asn-926, and His-952 each coordinate ADP. The interval 1009–1042 (KKAKKLTSSELRKKKKERMARRKKGEEVFSDEDD) is disordered. The span at 1020–1031 (RKKKKERMARRK) shows a compositional bias: basic residues.

Belongs to the ABC transporter superfamily. ABCF family. EF3 subfamily. Monomer.

It localises to the cytoplasm. It catalyses the reaction ATP + H2O = ADP + phosphate + H(+). It functions in the pathway protein biosynthesis; polypeptide chain elongation. Its function is as follows. Ribosome-dependent ATPase that functions in cytoplasmic translation elongation. Required for the ATP-dependent release of deacylated tRNA from the ribosomal E-site during protein biosynthesis. Stimulates the eEF1A-dependent binding of aminoacyl-tRNA to the ribosomal A-site, which has reduced affinity for tRNA as long as the E-site is occupied. Assists translation termination by stimulating the release of nascent protein from the ribosome by release factors. The sequence is that of Elongation factor 3 (TEF3) from Pneumocystis carinii.